Consider the following 209-residue polypeptide: Uracil phosphoribosyltransferase (209 aa).

5-phospho-alpha-D-ribose 1-diphosphate contacts are provided by residues Arg79, Arg104, and 131–139; that span reads DPMLATGGS. Residues Ile194 and 199 to 201 contribute to the uracil site; that span reads GDA. 5-phospho-alpha-D-ribose 1-diphosphate is bound at residue Asp200.

This sequence belongs to the UPRTase family. The cofactor is Mg(2+).

It catalyses the reaction UMP + diphosphate = 5-phospho-alpha-D-ribose 1-diphosphate + uracil. Its pathway is pyrimidine metabolism; UMP biosynthesis via salvage pathway; UMP from uracil: step 1/1. With respect to regulation, allosterically activated by GTP. Functionally, catalyzes the conversion of uracil and 5-phospho-alpha-D-ribose 1-diphosphate (PRPP) to UMP and diphosphate. This chain is Uracil phosphoribosyltransferase, found in Clostridium novyi (strain NT).